Consider the following 311-residue polypeptide: RNA polymerase sigma factor SigA4 (311 aa).

The segment at 78–148 is sigma-70 factor domain-2; that stretch reads MLKANLRLVV…TRAIDNHART (71 aa). The short motif at 102–105 is the Interaction with polymerase core subunit RpoC element; it reads DLIQ. Residues 157 to 234 form a sigma-70 factor domain-3 region; it reads EKISRIKKMT…DPKSLEPMDA (78 aa). A sigma-70 factor domain-4 region spans residues 247-304; that stretch reads WLAHLTEREQQVLQLRFGLHDGEQHTLAEIGRRLNVSRERIRQVEARALQKLRVLSQQ. A DNA-binding region (H-T-H motif) is located at residues 273 to 292; that stretch reads LAEIGRRLNVSRERIRQVEA.

Belongs to the sigma-70 factor family.

It localises to the cytoplasm. Functionally, sigma factors are initiation factors that promote the attachment of RNA polymerase to specific initiation sites and are then released. The polypeptide is RNA polymerase sigma factor SigA4 (sigA4) (Synechococcus elongatus (strain ATCC 33912 / PCC 7942 / FACHB-805) (Anacystis nidulans R2)).